Here is a 3033-residue protein sequence, read N- to C-terminus: Genome polyprotein (3033 aa).

Ser-2 carries the N-acetylserine; by host modification. The interval 2-23 (STNPKPQRKTKRNTNRRPQDVK) is interaction with STAT1. The interval 2-58 (STNPKPQRKTKRNTNRRPQDVKFPGGGQIVGGVYLLPRRGPRLGVRATRKTSERSQP) is interaction with EIF2AK2/PKR. The tract at residues 2–59 (STNPKPQRKTKRNTNRRPQDVKFPGGGQIVGGVYLLPRRGPRLGVRATRKTSERSQPR) is interaction with DDX3X. The segment at 2–75 (STNPKPQRKT…PKDRRSTGKS (74 aa)) is disordered. Over 2-168 (STNPKPQRKT…EDGVNFATGN (167 aa)) the chain is Cytoplasmic. 2 consecutive short sequence motifs (nuclear localization signal) follow at residues 5-13 (PKPQRKTKR) and 38-43 (PRRGPR). Basic residues predominate over residues 7-16 (PQRKTKRNTN). The segment covering 32 to 47 (GGVYLLPRRGPRLGVR) has biased composition (low complexity). At Ser-53 the chain carries Phosphoserine; by host. Short sequence motifs (nuclear localization signal) lie at residues 58–64 (PRGRRQP) and 66–71 (PKDRRS). The residue at position 99 (Ser-99) is a Phosphoserine; by host. The interval 112 to 152 (PRHRSRNVGKVIDTLTCGFADLMGYIPVVGAPLGGVARALA) is important for endoplasmic reticulum and mitochondrial localization. Position 116 is a phosphoserine; by host PKA (Ser-116). Residues 122 to 173 (VIDTLTCGFADLMGYIPVVGAPLGGVARALAHGVRVLEDGVNFATGNLPGCS) form an interaction with APOA2 region. The important for lipid droplets localization stretch occupies residues 164-167 (FATG). The chain crosses the membrane as a helical span at residues 169 to 189 (LPGCSFSIFLLALLSCITTPV). Residues 178–191 (LLALLSCITTPVSA) constitute a propeptide, ER anchor for the core protein, removed in mature form by host signal peptidase. At 190 to 358 (SAAEVKNIST…GGAHWGVMFG (169 aa)) the chain is on the lumenal side. Residues Asn-196, Asn-209, and Asn-234 are each glycosylated (N-linked (GlcNAc...) asparagine; by host). The tract at residues 265–296 (VVMSATLCSALYVGDLCGGVMLAAQMFIVSPQ) is important for fusion. Residue Asn-305 is glycosylated (N-linked (GlcNAc...) asparagine; by host). The chain crosses the membrane as a helical span at residues 359 to 379 (LAYFSMQGAWAKVVVILLLAA). At 380–729 (GVDAQTHTVG…WEWVVLLFLL (350 aa)) the chain is on the lumenal side. Residues 385–411 (THTVGGSTAHNARTLTGMFSLGARQKI) are HVR1. Asn-417, Asn-423, Asn-430, and Asn-448 each carry an N-linked (GlcNAc...) (high mannose) asparagine; by host glycan. 4 disulfide bridges follow: Cys-429–Cys-554, Cys-452–Cys-459, Cys-488–Cys-496, and Cys-505–Cys-510. A glycan (N-linked (GlcNAc...) (high mannose) asparagine; by host) is linked at Asn-477. The segment at 484 to 496 (MRPYCWHYPPRQC) is CD81-binding 1. The CD81-binding 2 stretch occupies residues 524-555 (LGAPTYTWGENETDVFLLNSTRPPQGSWFGCT). Residues Asn-534, Asn-542, and Asn-558 are each glycosylated (N-linked (GlcNAc...) (high mannose) asparagine; by host). Cysteines 566 and 571 form a disulfide. N-linked (GlcNAc...) (high mannose) asparagine; by host glycosylation is present at Asn-578. Cystine bridges form between Cys-585-Cys-589, Cys-601-Cys-624, and Cys-611-Cys-648. N-linked (GlcNAc...) (high mannose) asparagine; by host glycans are attached at residues Asn-627 and Asn-649. Residues Cys-656 and Cys-681 are joined by a disulfide bond. The EIF2AK2/eIF2-alpha phosphorylation homology domain (PePHD) stretch occupies residues 664–675 (SQLSPLLHSTTE). The helical transmembrane segment at 730–750 (LADARVCACLWMLILLGQAEA) threads the bilayer. The Lumenal segment spans residues 751-761 (ALEKLVVLHAA). A helical transmembrane segment spans residues 762 to 782 (SAASCNGFLYFVIFFVAAWYI). Residues 783–786 (KGRV) lie on the Cytoplasmic side of the membrane. A helical membrane pass occupies residues 787-807 (VPLATYSLTGLWSFGLLLLAL). At 808 to 817 (PQQAYAYDAS) the chain is on the lumenal side. The helical transmembrane segment at 818-838 (VHGQIGAALLVLITLFTLTPG) threads the bilayer. Residues 839 to 885 (YKTLLSRFLWWLCYLLTLAEAMVQEWAPPMQVRGGRDGIIWAVAIFC) are Cytoplasmic-facing. A helical transmembrane segment spans residues 886–906 (PGVVFDITKWLLAVLGPAYLL). The Lumenal segment spans residues 907-932 (KGALTRVPYFVRAHALLRMCTMVRHL). Residues 907-1030 (KGALTRVPYF…GYTSKGWSLL (124 aa)) form the Peptidase C18 domain. Positions 908 to 1210 (GALTRVPYFV…PVETLDIVTR (303 aa)) are protease NS2-3. Residue Cys-926 is the site of S-palmitoyl cysteine; by host attachment. Residues 933 to 953 (AGGRYVQMVLLALGRWTGTYI) form a helical membrane-spanning segment. Positions 933 to 953 (AGGRYVQMVLLALGRWTGTYI) are interaction with host SCPS1. Residues 954–1661 (YDHLTPMSDW…CMQADLEVMT (708 aa)) lie on the Cytoplasmic side of the membrane. Active-site for protease NS2 activity; shared with dimeric partner residues include His-956, Glu-976, and Cys-997. The Peptidase S29 domain maps to 1031–1212 (APITAYAQQT…ETLDIVTRSP (182 aa)). Active-site charge relay system; for serine protease NS3 activity residues include His-1087 and Asp-1111. Positions 1127 and 1129 each coordinate Zn(2+). Ser-1169 acts as the Charge relay system; for serine protease NS3 activity in catalysis. Residues Cys-1175 and His-1179 each contribute to the Zn(2+) site. Residues 1221-1373 (PAVPQTYQVG…PNIEEVALGQ (153 aa)) form the Helicase ATP-binding domain. 1234-1241 (APTGSGKS) provides a ligand contact to ATP. Positions 1241 and 1321 each coordinate Mg(2+). The short motif at 1320–1323 (DECH) is the DECH box element. The tract at residues 1490–1501 (QRRGRTGRGRLG) is RNA-binding. Residues 1662 to 1682 (STWVLAGGVLAAVAAYCLATG) traverse the membrane as a helical segment. Residues 1683 to 1694 (CVCIIGRLHVNQ) are NS3-binding. Residues 1683-1809 (CVCIIGRLHV…ALTSPLSTST (127 aa)) are Cytoplasmic-facing. The helical transmembrane segment at 1810 to 1830 (TILLNILGGWLASQIAPPAGA) threads the bilayer. Residues 1831-1832 (TG) are Lumenal-facing. Residues 1833-1853 (FVVSGLVGAAVGSIGLGKVLV) form a helical membrane-spanning segment. The segment at 1837–1865 (GLVGAAVGSIGLGKVLVDILAGYGAGISG) is glycine zipper. Asp-1854 is a topological domain (cytoplasmic). Residues 1855–1875 (ILAGYGAGISGALVAFKIMSG) form a helical membrane-spanning segment. Topologically, residues 1876–1885 (EKPSMEDVVN) are lumenal. A helical membrane pass occupies residues 1886-1906 (LLPGILSPGALVVGVICAAIL). At 1907–1976 (RRHVGPGEGA…WITEDCPIPC (70 aa)) the chain is on the cytoplasmic side. Cys-1972 is lipidated: S-palmitoyl cysteine; by host. Residue Cys-1976 is the site of S-palmitoyl cysteine; by host; partial attachment. An intramembrane segment occupies 1977-2007 (SGSWLRDVWDWVCTILTDFKNWLTSKLFPKM). Residues 1982 to 2002 (RDVWDWVCTILTDFKNWLTSK) are membrane-binding. Residues 2008–3012 (PGLPFISCQK…YHSVSRARPR (1005 aa)) are Cytoplasmic-facing. An RNA-binding region spans residues 2009 to 2225 (GLPFISCQKG…RATCTTHGKA (217 aa)). Zn(2+) contacts are provided by Cys-2015, Cys-2033, Cys-2035, and Cys-2056. Tyr-2069 is subject to Phosphotyrosine; by host. The tract at residues 2124-2212 (EFFSWVDGVQ…ASSSASQLSA (89 aa)) is FKBP8-binding. The tract at residues 2124 to 2332 (EFFSWVDGVQ…PTPPPRRRRT (209 aa)) is transcriptional activation. The interaction with non-structural protein 4A stretch occupies residues 2139-2143 (PIPKP). Disordered stretches follow at residues 2193–2214 (RLAR…SAPS) and 2309–2335 (ATVA…TVGL). Ser-2198 is subject to Phosphoserine; by host; in p56. The span at 2198-2214 (SPPSEASSSASQLSAPS) shows a compositional bias: low complexity. Ser-2201 is modified (phosphoserine; by host; in p58). Phosphoserine; by host; in p56 and p58, regulates intracellular NS5A distribution is present on Ser-2205. Phosphoserine; by host; in p58 occurs at positions 2208, 2211, and 2214. Residues 2210–2249 (LSAPSLRATCTTHGKAYDVDMVDANLFMGGDVTRIESESK) form an ISDR region. An interaction with EIF2AK2/PKR region spans residues 2214–2275 (SLRATCTTHG…LEPSIPSEYM (62 aa)). The interval 2253-2310 (LDSLDPMVEERSDLEPSIPSEYMLPKKRFPPALPAWARPDYNPPLVESWKRPDYQPAT) is NS4B-binding. A compositionally biased stretch (pro residues) spans 2316–2326 (LPPPKKTPTPP). Residues 2322-2325 (TPTP) carry the SH3-binding motif. Thr-2324 carries the phosphothreonine; by host modification. The Nuclear localization signal motif lies at 2326 to 2334 (PPRRRRTVG). The tract at residues 2336-2447 (SESSIADALQ…SVVCCSMSYS (112 aa)) is interaction with host IFI27. A Glycyl lysine isopeptide (Lys-Gly) (interchain with G-Cter in ubiquitin) cross-link involves residue Lys-2350. The segment at 2351–2431 (SFGQPPPSGD…PGSGSGSWST (81 aa)) is disordered. The interval 2358–2381 (SGDSGLSTGADAADSGSRTPPDEL) is V3. Residues 2398-2408 (EPGDPDLEPEQ) are compositionally biased toward acidic residues. Over residues 2417-2431 (GGVVTPGSGSGSWST) the composition is skewed to low complexity. Residues 2656–2774 (PMGFSYDTRC…ISESQGTEED (119 aa)) enclose the RdRp catalytic domain. Residues Asp-2662, Asp-2760, and Asp-2761 each coordinate Mg(2+). A helical membrane pass occupies residues 3013–3033 (LLLLGLLLLFVGVGLFLLPAR).

This sequence belongs to the hepacivirus polyprotein family. Homooligomer. Interacts with E1 (via C-terminus). Interacts with the non-structural protein 5A. Interacts (via N-terminus) with host STAT1 (via SH2 domain); this interaction results in decreased STAT1 phosphorylation and ubiquitin-mediated proteasome-dependent STAT1 degradation, leading to decreased IFN-stimulated gene transcription. Interacts with host STAT3; this interaction constitutively activates STAT3. Interacts with host LTBR receptor. Interacts with host TNFRSF1A receptor and possibly induces apoptosis. Interacts with host HNRPK. Interacts with host YWHAE. Interacts with host UBE3A/E6AP. Interacts with host DDX3X. Interacts with host APOA2. Interacts with host RXRA protein. Interacts with host SP110 isoform 3/Sp110b; this interaction sequesters the transcriptional corepressor SP110 away from the nucleus. Interacts with host CREB3 nuclear transcription protein; this interaction triggers cell transformation. Interacts with host ACY3. Interacts with host C1QR1. Interacts with host RBM24; this interaction, which enhances the interaction of the mature core protein with 5'-UTR, may inhibit viral translation and favor replication. Interacts with host EIF2AK2/PKR; this interaction induces the autophosphorylation of EIF2AK2. Part of the viral assembly initiation complex composed of NS2, E1, E2, NS3, NS4A, NS5A and the mature core protein. As to quaternary structure, forms a heterodimer with envelope glycoprotein E2. Interacts with mature core protein. Interacts with protease NS2. The heterodimer E1/E2 interacts with host CLDN1; this interaction plays a role in viral entry into host cell. Interacts with host SPSB2 (via C-terminus). Part of the viral assembly initiation complex composed of NS2, E1, E2, NS3, NS4A, NS5A and the mature core protein. Interacts with host NEURL3; this interaction prevents E1 binding to glycoprotein E2. In terms of assembly, forms a heterodimer with envelope glycoprotein E1. Interacts with host CD81 and SCARB1 receptors; this interaction may play a role in viral entry into host cell. Interacts with host EIF2AK2/PKR; this interaction inhibits EIF2AK2 and probably allows the virus to evade the innate immune response. Interacts with host CD209/DC-SIGN and CLEC4M/DC-SIGNR. Interact with host SPCS1; this interaction is essential for viral particle assembly. Interacts with protease NS2. The heterodimer E1/E2 interacts with host CLDN1; this interaction plays a role in viral entry into host cell. Part of the viral assembly initiation complex composed of NS2, E1, E2, NS3, NS4A, NS5A and the mature core protein. Interacts with host SLC3A2/4F2hc; the interaction may facilitate viral entry into host cell. Interacts with human PLSCR1. Homohexamer. Homoheptamer. Interacts with protease NS2. As to quaternary structure, homodimer. Interacts with host SPCS1; this interaction is essential for viral particle assembly. Interacts with envelope glycoprotein E1. Interacts with envelope glycoprotein E2. Interacts with viroporin p7. Interacts with serine protease/helicase NS3. Part of the replication complex composed of NS2, NS3, NS4A, NS4B, NS5A and the RNA-directed RNA polymerase embedded in an ER-derived membranous web. Part of the viral assembly initiation complex composed of NS2, E1, E2, NS3, NS4A, NS5A and the mature core protein. In terms of assembly, interacts with protease NS2. Interacts with non-structural protein 4A; this interaction stabilizes the folding of NS3 serine protease. NS3-NS4A interaction is essential for NS3 activation and allows membrane anchorage of the latter. NS3/NS4A complex also prevents phosphorylation of host IRF3, thus preventing the establishment of dsRNA induced antiviral state. Interacts with host MAVS; this interaction leads to the cleavage and inhibition of host MAVS. Interacts with host TICAM1; this interaction leads to the cleavage and inhibition of host TICAM1. Interacts with host TANK-binding kinase/TBK1; this interaction results in the inhibition of the association between TBK1 and IRF3, which leads to the inhibition of IRF3 activation. Interacts with host RBM24. Part of the replication complex composed of NS2, NS3, NS4A, NS4B, NS5A and the RNA-directed RNA polymerase embedded in an ER-derived membranous web. Part of the viral assembly initiation complex composed of NS2, E1, E2, NS3, NS4A, NS5A and the mature core protein. Interacts with NS3 serine protease; this interaction stabilizes the folding of NS3 serine protease. NS3-NS4A interaction is essential for NS3 activation and allows membrane anchorage of the latter. Interacts with non-structural protein 5A (via N-terminus). Part of the replication complex composed of NS2, NS3, NS4A, NS4B, NS5A and the RNA-directed RNA polymerase embedded in an ER-derived membranous web. Part of the viral assembly initiation complex composed of NS2, E1, E2, NS3, NS4A, NS5A and the mature core protein. As to quaternary structure, homomultimer. Interacts with non-structural protein NS5A. Interacts with host PLA2G4C; this interaction likely initiates the recruitment of replication complexes to lipid droplets. Interacts with host STING; this interaction disrupts the interaction between STING and TBK1 thereby suppressing the interferon signaling. Part of the replication complex composed of NS2, NS3, NS4A, NS4B, NS5A and the RNA-directed RNA polymerase embedded in an ER-derived membranous web. In terms of assembly, monomer. Homodimer; dimerization is required for RNA-binding. Interacts with the mature core protein. Interacts (via N-terminus) with non-structural protein 4A. Interacts with non-structural protein 4B. Interacts (via region D2) with RNA-directed RNA polymerase. Part of the viral assembly initiation complex composed of NS2, E1, E2, NS3, NS4A, NS5A and the mature core protein. Part of the replication complex composed of NS2, NS3, NS4A, NS4B, NS5A and the RNA-directed RNA polymerase embedded in an ER-derived membranous web. Interacts with host GRB2. Interacts with host BIN1. Interacts with host PIK3R1. Interacts with host SRCAP. Interacts with host FKBP8. Interacts (via C-terminus) with host VAPB (via MSP domain). Interacts with host EIF2AK2/PKR; this interaction leads to disruption of EIF2AK2 dimerization by NS5A and probably allows the virus to evade the innate immune response. Interacts (via N-terminus) with host PACSIN2 (via N-terminus); this interaction attenuates protein kinase C alpha-mediated phosphorylation of PACSIN2 by disrupting the interaction between PACSIN2 and PRKCA. Interacts (via N-terminus) with host SRC kinase (via SH2 domain). Interacts with most Src-family kinases. Interacts with host IFI27 and SKP2; promotes the ubiquitin-mediated proteasomal degradation of NS5A. Interacts with host GPS2. Interacts with host TNFRSF21; this interaction allows the modulation by the virus of JNK, p38 MAPK, STAT3, and Akt signaling pathways in a DR6-dependent manner. Interacts (via N-terminus) with host CIDEB (via N-terminus); this interaction seems to regulate the association of HCV particles with APOE. Interacts with host CHKA/Choline Kinase-alpha; CHKA bridges host PI4KA and NS5A and potentiates NS5A-stimulated PI4KA activity, which then facilitates the targeting of the ternary complex to the ER for viral replication. Interacts with host SPSB2 (via C-terminus); this interaction targets NS5A for ubiquitination and degradation. Interacts with host RAB18; this interaction may promote the association of NS5A and other replicase components with lipid droplets. Interacts (via region D2) with host PPIA/CYPA; the interaction stimulates RNA-binding ability of NS5A and is dependent on the peptidyl-prolyl cis-trans isomerase activity of PPIA/CYPA. Interacts with host TRIM14; this interaction induces the degradation of NS5A. Homooligomer. Interacts with non-structural protein 5A. Interacts with host VAPB. Interacts with host PRK2/PKN2. Interacts with host HNRNPA1 and SEPT6; these interactions facilitate viral replication. Part of the replication complex composed of NS2, NS3, NS4A, NS4B, NS5A and the RNA-directed RNA polymerase. Zn(2+) serves as cofactor. It depends on Mg(2+) as a cofactor. Specific enzymatic cleavages in vivo yield mature proteins. The structural proteins, core, E1, E2 and p7 are produced by proteolytic processing by host signal peptidases. The core protein precursor is synthesized as a 23 kDa, which is retained in the ER membrane through the hydrophobic signal peptide. Cleavage by the signal peptidase releases the 21 kDa mature core protein. The cleavage of the core protein precursor occurs between aminoacids 176 and 188 but the exact cleavage site is not known. Some degraded forms of the core protein appear as well during the course of infection. The other proteins (p7, NS2, NS3, NS4A, NS4B, NS5A and NS5B) are cleaved by the viral proteases. Autoprocessing between NS2 and NS3 is mediated by the NS2 cysteine protease catalytic domain and regulated by the NS3 N-terminal domain. In terms of processing, phosphorylated by host PKC and PKA. Post-translationally, ubiquitinated; mediated by UBE3A and leading to core protein subsequent proteasomal degradation. Highly N-glycosylated. In terms of processing, palmitoylation is required for NS2/3 autoprocessing and E2 recruitment to membranes. Post-translationally, palmitoylated. This modification may play a role in its polymerization or in protein-protein interactions. Phosphorylated on serines in a basal form termed p56. p58 is a hyperphosphorylated form of p56. p56 and p58 coexist in the cell in roughly equivalent amounts. Hyperphosphorylation is dependent on the presence of NS4A. Host CSNK1A1/CKI-alpha or RPS6KB1 kinases may be responsible for NS5A phosphorylation. In terms of processing, tyrosine phosphorylation is essential for the interaction with host SRC. Post-translationally, the N-terminus is phosphorylated by host PRK2/PKN2.

Its subcellular location is the host endoplasmic reticulum membrane. It is found in the host mitochondrion membrane. The protein localises to the virion. The protein resides in the host cytoplasm. It localises to the host nucleus. Its subcellular location is the host lipid droplet. It is found in the virion membrane. The protein localises to the host mitochondrion. The protein resides in the host cell membrane. It localises to the host perinuclear region. The enzyme catalyses Hydrolysis of four peptide bonds in the viral precursor polyprotein, commonly with Asp or Glu in the P6 position, Cys or Thr in P1 and Ser or Ala in P1'.. It carries out the reaction a ribonucleoside 5'-triphosphate + H2O = a ribonucleoside 5'-diphosphate + phosphate + H(+). The catalysed reaction is ATP + H2O = ADP + phosphate + H(+). It catalyses the reaction RNA(n) + a ribonucleoside 5'-triphosphate = RNA(n+1) + diphosphate. Its activity is regulated as follows. Inhibited by the antiviral drug hexamethylene amiloride. Inhibition by amantadine appears to be genotype-dependent. Also inhibited by long-alkyl-chain iminosugar derivatives. Activity is up-regulated by PRK2/PKN2-mediated phosphorylation. Packages viral RNA to form a viral nucleocapsid, and promotes virion budding. Participates in the viral particle production as a result of its interaction with the non-structural protein 5A. Binds RNA and may function as a RNA chaperone to induce the RNA structural rearrangements taking place during virus replication. Modulates viral translation initiation by interacting with viral IRES and 40S ribosomal subunit. Affects various cell signaling pathways, host immunity and lipid metabolism. Prevents the establishment of cellular antiviral state by blocking the interferon-alpha/beta (IFN-alpha/beta) and IFN-gamma signaling pathways and by blocking the formation of phosphorylated STAT1 and promoting ubiquitin-mediated proteasome-dependent degradation of STAT1. Activates STAT3 leading to cellular transformation. Regulates the activity of cellular genes, including c-myc and c-fos. May repress the promoter of p53, and sequester CREB3 and SP110 isoform 3/Sp110b in the cytoplasm. Represses cell cycle negative regulating factor CDKN1A, thereby interrupting an important check point of normal cell cycle regulation. Targets transcription factors involved in the regulation of inflammatory responses and in the immune response: suppresses TNF-induced NF-kappa-B activation, and activates AP-1. Binds to dendritic cells (DCs) via C1QR1, resulting in down-regulation of T-lymphocytes proliferation. Alters lipid metabolism by interacting with hepatocellular proteins involved in lipid accumulation and storage. Induces up-regulation of FAS promoter activity, and thereby contributes to the increased triglyceride accumulation in hepatocytes (steatosis). Functionally, forms a heterodimer with envelope glycoprotein E2, which mediates virus attachment to the host cell, virion internalization through clathrin-dependent endocytosis and fusion with host membrane. Fusion with the host cell is most likely mediated by both E1 and E2, through conformational rearrangements of the heterodimer required for fusion rather than a classical class II fusion mechanism. E1/E2 heterodimer binds host apolipoproteins such as APOB and APOE thereby forming a lipo-viro-particle (LVP). APOE associated to the LVP allows the initial virus attachment to cell surface receptors such as the heparan sulfate proteoglycans (HSPGs), syndecan-1 (SDC1), syndecan-1 (SDC2), the low-density lipoprotein receptor (LDLR) and scavenger receptor class B type I (SCARB1). The cholesterol transfer activity of SCARB1 allows E2 exposure and binding of E2 to SCARB1 and the tetraspanin CD81. E1/E2 heterodimer binding on CD81 activates the epithelial growth factor receptor (EGFR) signaling pathway. Diffusion of the complex E1-E2-EGFR-SCARB1-CD81 to the cell lateral membrane allows further interaction with Claudin 1 (CLDN1) and occludin (OCLN) to finally trigger HCV entry. In terms of biological role, forms a heterodimer with envelope glycoprotein E1, which mediates virus attachment to the host cell, virion internalization through clathrin-dependent endocytosis and fusion with host membrane. Fusion with the host cell is most likely mediated by both E1 and E2, through conformational rearrangements of the heterodimer required for fusion rather than a classical class II fusion mechanism. The interaction between envelope glycoprotein E2 and host apolipoprotein E/APOE allows the proper assembly, maturation and infectivity of the viral particles. This interaction is probably promoted via the up-regulation of cellular autophagy by the virus. E1/E2 heterodimer binds host apolipoproteins such as APOB and APOE thereby forming a lipo-viro-particle (LVP). APOE associated to the LVP allows the initial virus attachment to cell surface receptors such as the heparan sulfate proteoglycans (HSPGs), syndecan-1 (SDC1), syndecan-1 (SDC2), the low-density lipoprotein receptor (LDLR) and scavenger receptor class B type I (SCARB1). The cholesterol transfer activity of SCARB1 allows E2 exposure and binding of E2 to SCARB1 and the tetraspanin CD81. E1/E2 heterodimer binding on CD81 activates the epithelial growth factor receptor (EGFR) signaling pathway. Diffusion of the complex E1-E2-EGFR-SCARB1-CD81 to the cell lateral membrane allows further interaction with Claudin 1 (CLDN1) and occludin (OCLN) to finally trigger HCV entry. Inhibits host EIF2AK2/PKR activation, preventing the establishment of an antiviral state. Viral ligand for CD209/DC-SIGN and CLEC4M/DC-SIGNR, which are respectively found on dendritic cells (DCs), and on liver sinusoidal endothelial cells and macrophage-like cells of lymph node sinuses. These interactions allow the capture of circulating HCV particles by these cells and subsequent facilitated transmission to permissive cells such as hepatocytes and lymphocyte subpopulations. The interaction between E2 and host amino acid transporter complex formed by SLC3A2 and SLC7A5/LAT1 may facilitate viral entry into host cell. Its function is as follows. Ion channel protein that acts as a viroporin and plays an essential role in the assembly, envelopment and secretion of viral particles. Regulates the host cell secretory pathway, which induces the intracellular retention of viral glycoproteins and favors assembly of viral particles. Creates a pore in acidic organelles and releases Ca(2+) and H(+) in the cytoplasm of infected cells, leading to a productive viral infection. High levels of cytoplasmic Ca(2+) may trigger membrane trafficking and transport of viral ER-associated proteins to viroplasms, sites of viral genome replication. This ionic imbalance induces the assembly of the inflammasome complex, which triggers the maturation of pro-IL-1beta into IL-1beta through the action of caspase-1. Targets also host mitochondria and induces mitochondrial depolarization. In addition of its role as a viroporin, acts as a lipid raft adhesion factor. Cysteine protease required for the proteolytic auto-cleavage between the non-structural proteins NS2 and NS3. The N-terminus of NS3 is required for the function of NS2 protease (active region NS2-3). Promotes the initiation of viral particle assembly by mediating the interaction between structural and non-structural proteins. Functionally, displays three enzymatic activities: serine protease with a chymotrypsin-like fold, NTPase and RNA helicase. NS3 serine protease, in association with NS4A, is responsible for the cleavages of NS3-NS4A, NS4A-NS4B, NS4B-NS5A and NS5A-NS5B. The NS3/NS4A complex prevents phosphorylation of host IRF3, thus preventing the establishment of dsRNA induced antiviral state. The NS3/NS4A complex induces host amino acid transporter component SLC3A2, thus contributing to HCV propagation. NS3 RNA helicase binds to RNA and unwinds both dsDNA and dsRNA in the 3' to 5' direction, and likely resolves RNA complicated stable secondary structures in the template strand. Binds a single ATP and catalyzes the unzipping of a single base pair of dsRNA. Inhibits host antiviral proteins TBK1 and IRF3 thereby preventing the establishment of an antiviral state. Cleaves host MAVS/CARDIF thereby preventing the establishment of an antiviral state. Cleaves host TICAM1/TRIF, thereby disrupting TLR3 signaling and preventing the establishment of an antiviral state. In terms of biological role, induces a specific membrane alteration that serves as a scaffold for the virus replication complex. This membrane alteration gives rise to the so-called ER-derived membranous web that contains the replication complex. NS4B self-interaction contributes to its function in membranous web formation. Promotes host TRIF protein degradation in a CASP8-dependent manner thereby inhibiting host TLR3-mediated interferon signaling. Disrupts the interaction between STING and TBK1 contributing to the inhibition of interferon signaling. Its function is as follows. Phosphorylated protein that is indispensable for viral replication and assembly. Both hypo- and hyperphosphorylated states are required for the viral life cycle. The hyperphosphorylated form of NS5A is an inhibitor of viral replication. Involved in RNA-binding and especially in binding to the viral genome. Zinc is essential for RNA-binding. Participates in the viral particle production as a result of its interaction with the mature viral core protein. Its interaction with host VAPB may target the viral replication complex to vesicles. Down-regulates viral IRES translation initiation. Mediates interferon resistance, presumably by interacting with and inhibiting host EIF2AK2/PKR. Prevents BIN1-induced apoptosis. Acts as a transcriptional activator of some host genes important for viral replication when localized in the nucleus. Via the interaction with host PACSIN2, modulates lipid droplet formation in order to promote virion assembly. Modulates TNFRSF21/DR6 signaling pathway for viral propagation. RNA-dependent RNA polymerase that performs primer-template recognition and RNA synthesis during viral replication. Initiates RNA transcription/replication at a flavin adenine dinucleotide (FAD), resulting in a 5'- FAD cap on viral RNAs. In this way, recognition of viral 5' RNA by host pattern recognition receptors can be bypassed, thereby evading activation of antiviral pathways. The chain is Genome polyprotein from Homo sapiens (Human).